The primary structure comprises 540 residues: Glucose-6-phosphate isomerase (540 aa).

Glu-350 functions as the Proton donor in the catalytic mechanism. Residues His-381 and Lys-503 contribute to the active site.

Belongs to the GPI family.

It is found in the cytoplasm. The enzyme catalyses alpha-D-glucose 6-phosphate = beta-D-fructose 6-phosphate. It participates in carbohydrate biosynthesis; gluconeogenesis. It functions in the pathway carbohydrate degradation; glycolysis; D-glyceraldehyde 3-phosphate and glycerone phosphate from D-glucose: step 2/4. Catalyzes the reversible isomerization of glucose-6-phosphate to fructose-6-phosphate. This Burkholderia orbicola (strain AU 1054) protein is Glucose-6-phosphate isomerase.